Reading from the N-terminus, the 138-residue chain is 16 kDa phloem protein 2 (138 aa).

Residues 1 to 108 (MGMGMMEVHL…LAEGVRKGWS (108 aa)) form the C2 domain. The Ca(2+) site is built by Asp20, Asp27, Asp78, Asp80, and Asp86.

Requires Ca(2+) as cofactor. As to expression, sieve elements of leaves, stems, roots and flowers.

Binds to both sense and antisense RNA. Interacts with mesophyll plasmodesmata to mediate its own cell-to-cell transport and potentiate RNA trafficking. This Cucurbita maxima (Pumpkin) protein is 16 kDa phloem protein 2 (PP16-2).